The sequence spans 506 residues: 26S proteasome non-ATPase regulatory subunit 5 (506 aa).

It belongs to the proteasome subunit S5B/HSM3 family. Interacts with PI31; this interaction is increased by PI31 ADP-ribosylation. Interacts with Rpt2.

Its function is as follows. Acts as a chaperone during the assembly of the 26S proteasome. In Drosophila melanogaster (Fruit fly), this protein is 26S proteasome non-ATPase regulatory subunit 5.